A 356-amino-acid chain; its full sequence is Inactive ubiquitin thioesterase OTULINL (356 aa).

Positions 1–22 (MAATRSPTRARERERSGAPAAG) are disordered. Residues 1–83 (MAATRSPTRA…KWWIGYLQRK (83 aa)) are required for membrane binding. An OTU domain is found at 128-356 (KCVRQVRRDN…NDRHYHIPVF (229 aa)).

The protein belongs to the peptidase C65 family. Otulin subfamily. Does not bind ubiquitin or ubiquitin-like proteins.

The protein localises to the cytoplasm. The protein resides in the endoplasmic reticulum membrane. Its subcellular location is the nucleus envelope. Functionally, lacks deubiquitinase activity. This Homo sapiens (Human) protein is Inactive ubiquitin thioesterase OTULINL.